The primary structure comprises 485 residues: Cysteine--tRNA ligase (485 aa).

C28 provides a ligand contact to Zn(2+). A 'HIGH' region motif is present at residues M30–H40. Zn(2+) contacts are provided by C212, H237, and E241. Positions K269–S273 match the 'KMSKS' region motif. K272 lines the ATP pocket.

The protein belongs to the class-I aminoacyl-tRNA synthetase family. As to quaternary structure, monomer. Zn(2+) is required as a cofactor.

It localises to the cytoplasm. It carries out the reaction tRNA(Cys) + L-cysteine + ATP = L-cysteinyl-tRNA(Cys) + AMP + diphosphate. The protein is Cysteine--tRNA ligase of Bordetella bronchiseptica (strain ATCC BAA-588 / NCTC 13252 / RB50) (Alcaligenes bronchisepticus).